A 662-amino-acid chain; its full sequence is Transketolase (662 aa).

A substrate-binding site is contributed by His28. Residues His68 and 115 to 117 (GPL) contribute to the thiamine diphosphate site. Asp156 lines the Mg(2+) pocket. Gly157 and Asn186 together coordinate thiamine diphosphate. The Mg(2+) site is built by Asn186 and Ile188. His261, Arg356, and Ser383 together coordinate substrate. Residue His261 coordinates thiamine diphosphate. The active-site Proton donor is Glu410. Phe436 is a thiamine diphosphate binding site. Substrate-binding residues include His460, Asp468, and Arg519.

It belongs to the transketolase family. Homodimer. The cofactor is Mg(2+). Ca(2+) serves as cofactor. It depends on Mn(2+) as a cofactor. Co(2+) is required as a cofactor. Requires thiamine diphosphate as cofactor.

The enzyme catalyses D-sedoheptulose 7-phosphate + D-glyceraldehyde 3-phosphate = aldehydo-D-ribose 5-phosphate + D-xylulose 5-phosphate. The protein operates within carbohydrate biosynthesis; Calvin cycle. It participates in carbohydrate degradation; pentose phosphate pathway. Its function is as follows. Catalyzes the transfer of a two-carbon ketol group from a ketose donor to an aldose acceptor, via a covalent intermediate with the cofactor thiamine pyrophosphate. This Staphylococcus epidermidis (strain ATCC 35984 / DSM 28319 / BCRC 17069 / CCUG 31568 / BM 3577 / RP62A) protein is Transketolase (tkt).